The primary structure comprises 129 residues: Large ribosomal subunit protein bL12 (129 aa).

This sequence belongs to the bacterial ribosomal protein bL12 family. In terms of assembly, homodimer. Part of the ribosomal stalk of the 50S ribosomal subunit. Forms a multimeric L10(L12)X complex, where L10 forms an elongated spine to which 2 to 4 L12 dimers bind in a sequential fashion. Binds GTP-bound translation factors.

Functionally, forms part of the ribosomal stalk which helps the ribosome interact with GTP-bound translation factors. Is thus essential for accurate translation. The polypeptide is Large ribosomal subunit protein bL12 (Solidesulfovibrio magneticus (strain ATCC 700980 / DSM 13731 / RS-1) (Desulfovibrio magneticus)).